The chain runs to 918 residues: Protein translocase subunit SecA (918 aa).

ATP contacts are provided by residues Gln-87, Gly-105–Thr-109, and Asp-500. Residues Ala-876 to Arg-918 form a disordered region. Positions 902, 904, 913, and 914 each coordinate Zn(2+). Over residues Lys-908 to Arg-918 the composition is skewed to basic residues.

It belongs to the SecA family. Monomer and homodimer. Part of the essential Sec protein translocation apparatus which comprises SecA, SecYEG and auxiliary proteins SecDF-YajC and YidC. Zn(2+) is required as a cofactor.

It localises to the cell inner membrane. The protein localises to the cytoplasm. The enzyme catalyses ATP + H2O + cellular proteinSide 1 = ADP + phosphate + cellular proteinSide 2.. Part of the Sec protein translocase complex. Interacts with the SecYEG preprotein conducting channel. Has a central role in coupling the hydrolysis of ATP to the transfer of proteins into and across the cell membrane, serving both as a receptor for the preprotein-SecB complex and as an ATP-driven molecular motor driving the stepwise translocation of polypeptide chains across the membrane. In Rhodospirillum centenum (strain ATCC 51521 / SW), this protein is Protein translocase subunit SecA.